An 85-amino-acid chain; its full sequence is Alpha-mammal toxin AaH2 (85 aa).

The N-terminal stretch at 1–19 (MNYLVMISLALLFVTGVES) is a signal peptide. The LCN-type CS-alpha/beta domain maps to 21 to 83 (KDGYIVDDVN…VRTKGPGRCH (63 aa)). Intrachain disulfides connect Cys31–Cys82, Cys35–Cys55, Cys41–Cys65, and Cys45–Cys67. At His83 the chain carries Histidine amide.

Belongs to the long (4 C-C) scorpion toxin superfamily. Sodium channel inhibitor family. Alpha subfamily. In terms of processing, the amidation of His-83 is not necessary for toxicity. Expressed by the venom gland.

The protein resides in the secreted. Functionally, alpha toxin that binds voltage-independently at site-3 of sodium channels (Nav), inhibits the inactivation of the activated channels, and weakly inhibits activation, thereby blocking neuronal transmission. Inserts into voltage-sensing domain IV to stabilize a deactivated state, thereby preventing fast-inactivation. Principally slows the inactivation process of TTX-sensitive sodium channels. It is active on mammalian brain Nav1.2/SCN2A (EC(50)human=0.72 nM, EC(50)rat=2.6 nM), on rat skeletal muscle Nav1.4/SCN4A (EC(50)=2.2 nM), and on human neuronal Nav1.7/SCN9A (EC(50)=6.8-51.7 nM). In vivo, intraplantar injection into mice induces spontaneous pain responses. This chain is Alpha-mammal toxin AaH2, found in Androctonus australis (Sahara scorpion).